The primary structure comprises 458 residues: uncharacterized protein (458 aa).

A TRAM domain is found at 8–66; it reads PVEKNEFIDVVFEDLTHDGAGVAKVKGYPIFVKNGLPGEEAQIKIIKVKKNFAFGRLMK. Cys-79, Cys-85, Cys-88, and Cys-166 together coordinate [4Fe-4S] cluster. S-adenosyl-L-methionine contacts are provided by Gln-290, Tyr-319, Glu-340, and Asp-388. Cys-415 acts as the Nucleophile in catalysis.

Belongs to the class I-like SAM-binding methyltransferase superfamily. RNA M5U methyltransferase family.

This is an uncharacterized protein from Bacillus cereus (strain ATCC 14579 / DSM 31 / CCUG 7414 / JCM 2152 / NBRC 15305 / NCIMB 9373 / NCTC 2599 / NRRL B-3711).